A 387-amino-acid chain; its full sequence is Protein TsgA homolog (387 aa).

The next 12 helical transmembrane spans lie at 11–31 (WISF…GMIM), 47–67 (NIFT…SWLI), 76–96 (LIFG…STSI), 101–121 (INIF…TFII), 134–154 (LLLT…ISAY), 160–180 (ILWY…FILT), 205–225 (IILL…FISW), 243–263 (VLVS…SFII), 271–291 (MFIF…YSKS), 299–319 (IISL…LASL), 331–351 (LILF…SPIV), and 358–378 (TTLI…CIIF).

The protein belongs to the major facilitator superfamily. TsgA family.

Its subcellular location is the cell membrane. The chain is Protein TsgA homolog from Buchnera aphidicola subsp. Schizaphis graminum (strain Sg).